A 190-amino-acid polypeptide reads, in one-letter code: UPF0200 protein MTH_434 (190 aa).

Position 10–17 (10–17 (GMPGAGKG)) interacts with ATP.

Belongs to the UPF0200 family.

This Methanothermobacter thermautotrophicus (strain ATCC 29096 / DSM 1053 / JCM 10044 / NBRC 100330 / Delta H) (Methanobacterium thermoautotrophicum) protein is UPF0200 protein MTH_434.